The following is a 226-amino-acid chain: ATP-dependent dethiobiotin synthetase BioD (226 aa).

Position 12 to 17 (12 to 17 (GVGKTV)) interacts with ATP. Position 16 (Thr-16) interacts with Mg(2+). Residue Lys-37 is part of the active site. Position 41 (Thr-41) interacts with substrate. ATP contacts are provided by residues Asp-49, 108-111 (EGAG), 169-170 (GS), and 197-199 (PAG). The Mg(2+) site is built by Asp-49 and Glu-108.

This sequence belongs to the dethiobiotin synthetase family. As to quaternary structure, homodimer. Mg(2+) serves as cofactor.

It localises to the cytoplasm. It catalyses the reaction (7R,8S)-7,8-diammoniononanoate + CO2 + ATP = (4R,5S)-dethiobiotin + ADP + phosphate + 3 H(+). It participates in cofactor biosynthesis; biotin biosynthesis; biotin from 7,8-diaminononanoate: step 1/2. Its function is as follows. Catalyzes a mechanistically unusual reaction, the ATP-dependent insertion of CO2 between the N7 and N8 nitrogen atoms of 7,8-diaminopelargonic acid (DAPA, also called 7,8-diammoniononanoate) to form a ureido ring. The sequence is that of ATP-dependent dethiobiotin synthetase BioD from Mycobacterium leprae (strain Br4923).